Consider the following 556-residue polypeptide: Small ribosomal subunit protein uS3m (556 aa).

The protein belongs to the universal ribosomal protein uS3 family. As to quaternary structure, component of the mitochondrial ribosome small subunit.

It localises to the mitochondrion. The protein is Small ribosomal subunit protein uS3m (RPS3) of Arabidopsis thaliana (Mouse-ear cress).